The following is a 518-amino-acid chain: Metal transporter Nramp1 (518 aa).

Transmembrane regions (helical) follow at residues 35-55 (FLSH…PGNM), 68-88 (ELLW…SLSA), 107-127 (PVWV…ASDI), 131-151 (IGTG…GVLI), 172-192 (VVVA…MSIV), 218-238 (IALL…ALVL), 255-275 (FFLF…IAII), 315-337 (SATV…GTYA), 357-377 (LMTR…GGSS), 382-402 (LIVI…IPLL), 418-438 (IYIV…NIYF), and 458-478 (VLIG…VIYL).

This sequence belongs to the NRAMP (TC 2.A.55) family.

Its subcellular location is the membrane. Probable metal transporter that may participate in the control of iron homeostasis. The protein is Metal transporter Nramp1 (NRAMP1) of Oryza sativa subsp. japonica (Rice).